A 34-amino-acid polypeptide reads, in one-letter code: Corticostatin-6 (34 aa).

3 disulfides stabilise this stretch: Cys3–Cys31, Cys5–Cys20, and Cys10–Cys30.

Belongs to the alpha-defensin family. As to expression, lung, spleen, small intestine, pituitary gland, adrenal medulla and plasma.

Its subcellular location is the secreted. Microbicidal activity and inhibits corticotropin (ACTH) stimulated corticosterone production. This is Corticostatin-6 from Oryctolagus cuniculus (Rabbit).